We begin with the raw amino-acid sequence, 125 residues long: Large ribosomal subunit protein bL12 (125 aa).

This sequence belongs to the bacterial ribosomal protein bL12 family. As to quaternary structure, homodimer. Part of the ribosomal stalk of the 50S ribosomal subunit. Forms a multimeric L10(L12)X complex, where L10 forms an elongated spine to which 2 to 4 L12 dimers bind in a sequential fashion. Binds GTP-bound translation factors.

Forms part of the ribosomal stalk which helps the ribosome interact with GTP-bound translation factors. Is thus essential for accurate translation. The polypeptide is Large ribosomal subunit protein bL12 (Sphingopyxis alaskensis (strain DSM 13593 / LMG 18877 / RB2256) (Sphingomonas alaskensis)).